The chain runs to 453 residues: Iron-sulfur cluster assembly SufBD family protein slr0076 (453 aa).

This sequence belongs to the iron-sulfur cluster assembly SufBD family.

This is Iron-sulfur cluster assembly SufBD family protein slr0076 from Synechocystis sp. (strain ATCC 27184 / PCC 6803 / Kazusa).